The following is a 209-amino-acid chain: MSETYVLKADLRTRVGKGSSRELRRNGQIPAVIYGDKQEPLAIAVSYKEIFYKIHGGGFKTTVATIEVDGKKIQVLPKDYQLDPVRDFPQHVDFLRVSAKSVVHVNVPVHFKNEEAAPGIKRGGVLNIVRHDVELIVPANAIPEALEFDLTGLEIGDSVHISAIKLPKGVTAAIQDRDFTIATIAAPAGLKSEEAASEGAAEEEAKDGE.

Residues 190 to 209 (LKSEEAASEGAAEEEAKDGE) form a disordered region. Over residues 200 to 209 (AAEEEAKDGE) the composition is skewed to acidic residues.

This sequence belongs to the bacterial ribosomal protein bL25 family. CTC subfamily. Part of the 50S ribosomal subunit; part of the 5S rRNA/L5/L18/L25 subcomplex. Contacts the 5S rRNA. Binds to the 5S rRNA independently of L5 and L18.

Its function is as follows. This is one of the proteins that binds to the 5S RNA in the ribosome where it forms part of the central protuberance. The protein is Large ribosomal subunit protein bL25 of Brucella anthropi (strain ATCC 49188 / DSM 6882 / CCUG 24695 / JCM 21032 / LMG 3331 / NBRC 15819 / NCTC 12168 / Alc 37) (Ochrobactrum anthropi).